Here is a 372-residue protein sequence, read N- to C-terminus: Monocyte differentiation antigen CD14 (372 aa).

Residues 1–17 (MKLMLGLLLLPLTLVHA) form the signal peptide. Intrachain disulfides connect Cys-25–Cys-38 and Cys-36–Cys-53. N-linked (GlcNAc...) asparagine glycosylation is found at Asn-39 and Asn-46. LRR repeat units lie at residues 57-84 (EDVE…LGQY), 85-120 (TDII…YSGL), 121-146 (RELT…GPDL), 147-174 (NTLS…KPGL), 175-198 (KVLS…FPAL), 199-226 (ATLD…FPTL), 227-253 (QVLA…RVPL), 254-278 (QALD…PSQL), 279-299 (NSLN…PAKL), 300-321 (SVLD…LPEV), and 322-346 (GSLS…SGVV). Asn-153 and Asn-186 each carry an N-linked (GlcNAc...) asparagine glycan. Cystine bridges form between Cys-189–Cys-219 and Cys-243–Cys-272. N-linked (GlcNAc...) asparagine glycosylation is present at Asn-282. The tract at residues 290–372 (HVPKGLPAKL…ALLLGHRLFV (83 aa)) is required for response to bacterial lipopolysaccharide (LPS). Asn-342 carries the GPI-anchor amidated asparagine lipid modification. Positions 343–372 (SGVVIATALSPGSAGLSGTLALLLGHRLFV) are cleaved as a propeptide — removed in mature form.

Belongs to the lipopolysaccharide (LPS) receptor, a multi-protein complex containing at least CD14, LY96 and TLR4. Interacts with LPS-bound LPB. Interacts with LPAR1. Interacts with the TLR2:TLR6 or TLR2:TLR1 heterodimers; upon interaction with ligands such as diacylated lipopeptides and triacylated lipopeptides, respectively. Interacts with MYO18A. Interacts with FSTL1. Detected in macrophages and peripheral blood monocytes.

It localises to the cell membrane. Its subcellular location is the secreted. It is found in the membrane raft. The protein localises to the golgi apparatus. Functionally, coreceptor for bacterial lipopolysaccharide. In concert with LBP, binds to monomeric lipopolysaccharide and delivers it to the LY96/TLR4 complex, thereby mediating the innate immune response to bacterial lipopolysaccharide (LPS). Acts via MyD88, TIRAP and TRAF6, leading to NF-kappa-B activation, cytokine secretion and the inflammatory response. Acts as a coreceptor for TLR2:TLR6 heterodimer in response to diacylated lipopeptides and for TLR2:TLR1 heterodimer in response to triacylated lipopeptides, these clusters trigger signaling from the cell surface and subsequently are targeted to the Golgi in a lipid-raft dependent pathway. Binds electronegative LDL (LDL(-)) and mediates the cytokine release induced by LDL(-). The polypeptide is Monocyte differentiation antigen CD14 (Cd14) (Rattus norvegicus (Rat)).